Here is a 276-residue protein sequence, read N- to C-terminus: NADPH-dependent 7-cyano-7-deazaguanine reductase (276 aa).

80–82 contacts substrate; sequence IES. 82-83 contacts NADPH; the sequence is SK. The Thioimide intermediate role is filled by Cys178. The active-site Proton donor is the Asp185. 217-218 serves as a coordination point for substrate; sequence HE. 246 to 247 contacts NADPH; sequence RG.

This sequence belongs to the GTP cyclohydrolase I family. QueF type 2 subfamily. As to quaternary structure, homodimer.

It localises to the cytoplasm. The enzyme catalyses 7-aminomethyl-7-carbaguanine + 2 NADP(+) = 7-cyano-7-deazaguanine + 2 NADPH + 3 H(+). Its pathway is tRNA modification; tRNA-queuosine biosynthesis. In terms of biological role, catalyzes the NADPH-dependent reduction of 7-cyano-7-deazaguanine (preQ0) to 7-aminomethyl-7-deazaguanine (preQ1). This Teredinibacter turnerae (strain ATCC 39867 / T7901) protein is NADPH-dependent 7-cyano-7-deazaguanine reductase.